A 235-amino-acid polypeptide reads, in one-letter code: Large ribosomal subunit protein uL1 (235 aa).

Belongs to the universal ribosomal protein uL1 family. In terms of assembly, part of the 50S ribosomal subunit.

Its function is as follows. Binds directly to 23S rRNA. The L1 stalk is quite mobile in the ribosome, and is involved in E site tRNA release. In terms of biological role, protein L1 is also a translational repressor protein, it controls the translation of the L11 operon by binding to its mRNA. In Lawsonia intracellularis (strain PHE/MN1-00), this protein is Large ribosomal subunit protein uL1.